The chain runs to 383 residues: GTPase-interacting component 2 (383 aa).

A disordered region spans residues 63-106 (SNKKNIELPPLSPNSHPSCHHRRSNSNSAKSKESSSSSSSANKT). The span at 87 to 105 (NSNSAKSKESSSSSSSANK) shows a compositional bias: low complexity. The region spanning 134–147 (ISTPFDFQHISHAD) is the CRIB domain. The segment covering 155-165 (EQLQEPSSLST) has biased composition (polar residues). The disordered stretch occupies residues 155–189 (EQLQEPSSLSTEIKDDYTSSSSKRDSKSLNKAFVT). Residues 166–182 (EIKDDYTSSSSKRDSKS) are compositionally biased toward basic and acidic residues. S254, S258, S337, S345, and S367 each carry phosphoserine. Residues 319 to 361 (ETPNSNKDSAKAFFPSRQSPLPKRRNSIATPSPQSKFSYSDSP) are disordered. A compositionally biased stretch (polar residues) spans 345–361 (SIATPSPQSKFSYSDSP).

This sequence belongs to the BORG/CEP family. As to quaternary structure, interacts with GTP-bound CDC42.

It is found in the bud neck. The protein localises to the bud tip. It localises to the cytoplasm. Its subcellular location is the cell cortex. The protein resides in the cytoskeleton. Required for cell size and shape control, bud site selection, bud emergence, actin cytoskeletal organization, mitotic spindle orientation/positioning, and mating projection formation in response to mating pheromone. The sequence is that of GTPase-interacting component 2 (GIC2) from Saccharomyces cerevisiae (strain ATCC 204508 / S288c) (Baker's yeast).